The primary structure comprises 333 residues: D-2-hydroxyacid dehydrogenase (NAD+) (333 aa).

Residue Tyr100 coordinates 4-methyl-2-oxopentanoate. Residues His155, Ile156, Asp175, Val205, Asn211, Thr232, Arg234, and Asp258 each contribute to the NAD(+) site. Residue Arg234 is part of the active site. Residue Glu263 is part of the active site. His295 contacts 4-methyl-2-oxopentanoate. The active-site Proton donor is His295.

It belongs to the D-isomer specific 2-hydroxyacid dehydrogenase family. As to quaternary structure, homodimer.

The enzyme catalyses a (2R)-2-hydroxycarboxylate + NAD(+) = a 2-oxocarboxylate + NADH + H(+). The catalysed reaction is (2R)-hydroxy-4-methylpentanoate + NAD(+) = 4-methyl-2-oxopentanoate + NADH + H(+). It catalyses the reaction (R)-3-phenyllactate + NAD(+) = 3-phenylpyruvate + NADH + H(+). Its activity is regulated as follows. Completely inhibited In the presence of 0.1 mM Hg(2+). No influence on the activity could be detected with Mg(2+) and Ca(2+) and only very weak effects with Cd(2+), Co(2+) and Mn(2+). Reducing agents and thiol group reagents do not affect catalytic activity. Catalyzes the NADH-dependent reversible reduction of various 2-ketocarboxylic acids to the corresponding D-2-hydroxycarboxylic acids. In vitro can use various substrates, including 4-methyl-2-oxopentanoate (2-oxoisocaproate), 2-oxopentanoate, 2-oxohexanoate and phenylpyruvate. The sequence is that of D-2-hydroxyacid dehydrogenase (NAD+) from Lacticaseibacillus paracasei (Lactobacillus paracasei).